The primary structure comprises 700 residues: DNA ligase 2 (700 aa).

NAD(+)-binding positions include 42–46 (DDAYD) and 89–90 (SL). Lysine 122 acts as the N6-AMP-lysine intermediate in catalysis. 4 residues coordinate NAD(+): arginine 143, glutamate 177, lysine 303, and lysine 327. Zn(2+)-binding residues include cysteine 421, cysteine 424, cysteine 437, and cysteine 443. Residues 590-621 (MTEPGATPPRPADTDGADGATAEAPGDGGPLA) are disordered. Residues 615–700 (GDGGPLAGMK…FAVLVAGLLS (86 aa)) enclose the BRCT domain.

It belongs to the NAD-dependent DNA ligase family. LigA subfamily. Mg(2+) serves as cofactor. It depends on Mn(2+) as a cofactor.

It carries out the reaction NAD(+) + (deoxyribonucleotide)n-3'-hydroxyl + 5'-phospho-(deoxyribonucleotide)m = (deoxyribonucleotide)n+m + AMP + beta-nicotinamide D-nucleotide.. In terms of biological role, DNA ligase that catalyzes the formation of phosphodiester linkages between 5'-phosphoryl and 3'-hydroxyl groups in double-stranded DNA using NAD as a coenzyme and as the energy source for the reaction. It is essential for DNA replication and repair of damaged DNA. This Streptomyces coelicolor (strain ATCC BAA-471 / A3(2) / M145) protein is DNA ligase 2.